The sequence spans 102 residues: ATP-dependent Clp protease adapter protein ClpS (102 aa).

Belongs to the ClpS family. Binds to the N-terminal domain of the chaperone ClpA.

Functionally, involved in the modulation of the specificity of the ClpAP-mediated ATP-dependent protein degradation. The polypeptide is ATP-dependent Clp protease adapter protein ClpS (Shewanella amazonensis (strain ATCC BAA-1098 / SB2B)).